The sequence spans 249 residues: Pulmonary surfactant-associated protein A (249 aa).

An N-terminal signal peptide occupies residues 1-20; the sequence is MLRWPLALTFLLLAVSGLEC. The Collagen-like domain maps to 28–100; sequence ASPGIPGTPG…PGERGPPGLP (73 aa). The segment at 29–102 is disordered; that stretch reads SPGIPGTPGS…ERGPPGLPAH (74 aa). 4-hydroxyproline is present on residues Pro-30, Pro-33, Pro-36, Pro-42, Pro-54, Pro-57, Pro-63, and Pro-70. Positions 42–51 are enriched in basic and acidic residues; it reads PGRDGRDGIK. Positions 84–93 are enriched in basic and acidic residues; the sequence is ERGEKGEPGE. A C-type lectin domain is found at 133–249; sequence AVGEKVFSTN…QQYRLAICEF (117 aa). Cystine bridges form between Cys-155–Cys-247 and Cys-225–Cys-239. An N-linked (GlcNAc...) asparagine glycan is attached at Asn-208. Residues Glu-216, Arg-218, Asn-235, and Asp-236 each coordinate Ca(2+).

It belongs to the SFTPA family. As to quaternary structure, oligomeric complex of 6 set of homotrimers.

Its subcellular location is the secreted. The protein localises to the extracellular space. The protein resides in the extracellular matrix. It is found in the surface film. In presence of calcium ions, it binds to surfactant phospholipids and contributes to lower the surface tension at the air-liquid interface in the alveoli of the mammalian lung and is essential for normal respiration. Enhances the expression of MYO18A/SP-R210 on alveolar macrophages. The chain is Pulmonary surfactant-associated protein A (SFTPA1) from Sus scrofa (Pig).